Here is a 223-residue protein sequence, read N- to C-terminus: Putative HTLV-1-related endogenous sequence (223 aa).

The span at 1-19 (MRCAHAPAPRTRYPTRAPS) shows a compositional bias: low complexity. A disordered region spans residues 1–184 (MRCAHAPAPR…ARAHGEAGAG (184 aa)). Residues 115-126 (GDRRREGPDRSP) show a composition bias toward basic and acidic residues. Over residues 133–157 (PAAAAQPDSSSAQAPGPSTLRPAAT) the composition is skewed to low complexity.

The sequence is that of Putative HTLV-1-related endogenous sequence (HRES1) from Homo sapiens (Human).